A 118-amino-acid chain; its full sequence is Basic phospholipase A2 CM-III (118 aa).

Intrachain disulfides connect cysteine 11-cysteine 70, cysteine 26-cysteine 117, cysteine 28-cysteine 44, cysteine 43-cysteine 98, cysteine 50-cysteine 91, cysteine 59-cysteine 84, and cysteine 77-cysteine 89. 3 residues coordinate Ca(2+): tyrosine 27, glycine 29, and glycine 31. Histidine 47 is an active-site residue. Aspartate 48 serves as a coordination point for Ca(2+). Positions glutamate 52–lysine 69 match the Coagulation factor Xa binding motif motif. Residue aspartate 92 is part of the active site.

It belongs to the phospholipase A2 family. Group I subfamily. D49 sub-subfamily. The cofactor is Ca(2+). In terms of tissue distribution, expressed by the venom gland.

The protein localises to the secreted. The catalysed reaction is a 1,2-diacyl-sn-glycero-3-phosphocholine + H2O = a 1-acyl-sn-glycero-3-phosphocholine + a fatty acid + H(+). In terms of biological role, snake venom phospholipase A2 (PLA2) that shows several activities. It shows strong anticoagulant activity, probably by binding to coagulation factor Xa (F10) and inhibiting the formation of the prothrombinase complex, shows direct hemolytic action, causes neuromuscular blockade with a gradual contracture and a decreased sensitivity to ACh and KCl, abolishes twitches evoked by indirect stimulation earlier than those by direct stimulation (in the mouse phrenic nerve-diaphragm preparation), and causes myonecrosis when injected intramuscularly. PLA2 catalyzes the calcium-dependent hydrolysis of the 2-acyl groups in 3-sn-phosphoglycerides. This Naja mossambica (Mozambique spitting cobra) protein is Basic phospholipase A2 CM-III.